Reading from the N-terminus, the 465-residue chain is Ribulose bisphosphate carboxylase large chain (465 aa).

Position 4 is an N6,N6,N6-trimethyllysine (K4). N113 and T163 together coordinate substrate. The active-site Proton acceptor is K165. K167 contributes to the substrate binding site. Positions 191, 193, and 194 each coordinate Mg(2+). At K191 the chain carries N6-carboxylysine. The Proton acceptor role is filled by H284. The substrate site is built by R285, H317, and S369.

The protein belongs to the RuBisCO large chain family. Type I subfamily. As to quaternary structure, heterohexadecamer of 8 large chains and 8 small chains; disulfide-linked. The disulfide link is formed within the large subunit homodimers. The cofactor is Mg(2+). In terms of processing, the disulfide bond which can form in the large chain dimeric partners within the hexadecamer appears to be associated with oxidative stress and protein turnover.

Its subcellular location is the plastid. It localises to the chloroplast. The catalysed reaction is 2 (2R)-3-phosphoglycerate + 2 H(+) = D-ribulose 1,5-bisphosphate + CO2 + H2O. It catalyses the reaction D-ribulose 1,5-bisphosphate + O2 = 2-phosphoglycolate + (2R)-3-phosphoglycerate + 2 H(+). Functionally, ruBisCO catalyzes two reactions: the carboxylation of D-ribulose 1,5-bisphosphate, the primary event in carbon dioxide fixation, as well as the oxidative fragmentation of the pentose substrate in the photorespiration process. Both reactions occur simultaneously and in competition at the same active site. The protein is Ribulose bisphosphate carboxylase large chain of Cassia fistula (Golden shower tree).